The following is a 256-amino-acid chain: tRNA pseudouridine synthase A (256 aa).

Asp-55 acts as the Nucleophile in catalysis. Tyr-113 lines the substrate pocket.

This sequence belongs to the tRNA pseudouridine synthase TruA family. Homodimer.

It carries out the reaction uridine(38/39/40) in tRNA = pseudouridine(38/39/40) in tRNA. Its function is as follows. Formation of pseudouridine at positions 38, 39 and 40 in the anticodon stem and loop of transfer RNAs. This Ligilactobacillus salivarius (strain UCC118) (Lactobacillus salivarius) protein is tRNA pseudouridine synthase A.